Here is a 315-residue protein sequence, read N- to C-terminus: Cytochrome f (315 aa).

Positions 1-30 are cleaved as a signal peptide; that stretch reads MRTFLKFSTLVSKGVLVLVCSFFLTASSNA. Heme-binding residues include Tyr-31, Cys-51, Cys-54, and His-55. A helical transmembrane segment spans residues 281–300; that stretch reads IQGLLVFFLFVLLAQVFLVL.

It belongs to the cytochrome f family. The 4 large subunits of the cytochrome b6-f complex are cytochrome b6, subunit IV (17 kDa polypeptide, petD), cytochrome f and the Rieske protein, while the 4 small subunits are PetG, PetL, PetM and PetN. The complex functions as a dimer. Heme is required as a cofactor.

The protein resides in the plastid. Its subcellular location is the chloroplast thylakoid membrane. Functionally, component of the cytochrome b6-f complex, which mediates electron transfer between photosystem II (PSII) and photosystem I (PSI), cyclic electron flow around PSI, and state transitions. The polypeptide is Cytochrome f (petA) (Chlorella vulgaris (Green alga)).